Reading from the N-terminus, the 430-residue chain is Stress protein DDR48 (430 aa).

Residues 1-430 (MGLFDKVKQF…RNQYGGDDDY (430 aa)) form a disordered region. A compositionally biased stretch (low complexity) spans 12–27 (NSNNNNNDSGNNNQGD). Positions 37-60 (GEDRVNQFKSKIGEDRFDKMESKV) are enriched in basic and acidic residues. The segment covering 70 to 421 (NDNDSNNNDS…SYGSSNRGGR (352 aa)) has biased composition (low complexity). Repeat copies occupy residues 74–81 (SNNNDSYG), 82–89 (SNNNDSYG), 90–97 (SNNNDSYG), 98–105 (SNNNDSYG), 106–113 (SNNNDSYG), and 114–121 (SNNDDSYG). The tract at residues 74 to 414 (SNNNDSYGSN…GSSNNDDSYG (341 aa)) is 38 X 8 AA approximate tandem repeats of S-[NS]-N-[ND]-D-S-Y-G. The 7; approximate repeat unit spans residues 124 to 131 (NKKKSSYG). 5 consecutive repeat copies span residues 132–139 (SNNDDSYG), 141–148 (SNNNDSYG), 149–156 (SNNNDSYG), 157–164 (SNNNDSYG), and 165–172 (SNNDDSYG). A 13; approximate repeat occupies 175–182 (NKNKSSYG). Phosphoserine occurs at positions 183 and 191. 2 consecutive repeat copies span residues 183–190 (SNNDDSYG) and 191–198 (SNNDDSYG). Residues 201-208 (NKKKSSYG) form a 16; approximate repeat. 4 tandem repeats follow at residues 209-216 (SSNNDSYG), 217-224 (SNNDDSYG), 225-232 (SNNNDSYG), and 233-240 (SNNDDSYG). One copy of the 21; approximate repeat lies at 243 to 250 (NKKKSSYG). 3 tandem repeats follow at residues 251-258 (SNNDDSYG), 260-267 (SNNNDSYG), and 268-275 (SNNDDSYG). Residues 278–285 (NKNKSSYG) form a 25; approximate repeat. Tandem repeats lie at residues 287-294 (SSNDDSYG) and 296-303 (SNNDDSYG). Residues 306-313 (NKKKSSYG) form a 28; approximate repeat. A phosphoserine mark is found at Ser314 and Ser322. Tandem repeats lie at residues 314–321 (SNNDDSYG) and 322–329 (SNNDDSYG). Residues 332–339 (NKKKSSYG) form a 31; approximate repeat. 2 repeat units span residues 340–347 (SSNNDSYG) and 348–355 (SNNDDSYG). The 34; approximate repeat unit spans residues 358–365 (NKKKSSYG). Tandem repeats lie at residues 366–373 (SNNDDSYG) and 375–382 (SNNNDSYG). The stretch at 393-400 (NRNKNSYG) is one 37; approximate repeat. Residues 407 to 414 (SNNDDSYG) form repeat 38.

The protein belongs to the DDR48 family. In terms of processing, probably highly glycosylated.

In terms of biological role, DNA damage-responsive protein that may be required for maintaining the rate of spontaneous mutagenesis. Shows low ATP and GTP hydrolysis activity. Dispensable for acquisition of thermotolerance and does not play a significant role in recovery or protection of cells from acute heat shock. The protein is Stress protein DDR48 (DDR48) of Saccharomyces cerevisiae (strain ATCC 204508 / S288c) (Baker's yeast).